The following is a 354-amino-acid chain: MRLEKGMKIKDTLKIMCPGTQLREGLENILRAKTGGLIVIGDNKEVMDTVDGGFTLNSDYSPSYVYELAKMDGAIVISEDLKKIVCANAQLIPDPSIITHETGTRHRTAHRIAKQTNNIVIAISQRRNIITVYKGDIKYVLRDSSVILARANQAIQTLEKYVSVLERVINNLNLLEFQDLTTLFDVVTAIQRTEMVMRIVEEINMYILELGNEGRLISMQLNELVKHIERDGILLIRDYCKEDFEYNEVYEQIQKLSAAELLDLDAIARLLGHTGDPLVDTLISAKGYRILGKVPRIPSTVIENLIKEFRELNSVIEADLDELDIVEGIGEARAKAIKDGLKRIREQILLNKKI.

Positions glycine 6–serine 144 constitute a DAC domain. Residues glycine 73, leucine 91, and threonine 104–threonine 108 contribute to the ATP site.

This sequence belongs to the DisA family. Homooctamer. Mg(2+) serves as cofactor.

The enzyme catalyses 2 ATP = 3',3'-c-di-AMP + 2 diphosphate. Functionally, participates in a DNA-damage check-point that is active prior to asymmetric division when DNA is damaged. DisA forms globular foci that rapidly scan along the chromosomes during sporulation, searching for lesions. When a lesion is present, DisA pauses at the lesion site. This triggers a cellular response that culminates in a temporary block in sporulation initiation. In terms of biological role, also has diadenylate cyclase activity, catalyzing the condensation of 2 ATP molecules into cyclic di-AMP (c-di-AMP). c-di-AMP acts as a signaling molecule that couples DNA integrity with progression of sporulation. The rise in c-di-AMP level generated by DisA while scanning the chromosome, operates as a positive signal that advances sporulation; upon encountering a lesion, the DisA focus arrests at the damaged site and halts c-di-AMP synthesis. The polypeptide is DNA integrity scanning protein DisA (Clostridium botulinum (strain Alaska E43 / Type E3)).